A 342-amino-acid polypeptide reads, in one-letter code: Anthranilate phosphoribosyltransferase (342 aa).

5-phospho-alpha-D-ribose 1-diphosphate-binding positions include G84, 87–88 (GD), T92, 94–97 (NIST), 112–120 (KHGNRGVSS), and S124. Residue G84 participates in anthranilate binding. S96 is a Mg(2+) binding site. N115 contacts anthranilate. Residue R170 participates in anthranilate binding. The Mg(2+) site is built by D229 and E230.

It belongs to the anthranilate phosphoribosyltransferase family. In terms of assembly, homodimer. Mg(2+) serves as cofactor.

It catalyses the reaction N-(5-phospho-beta-D-ribosyl)anthranilate + diphosphate = 5-phospho-alpha-D-ribose 1-diphosphate + anthranilate. It functions in the pathway amino-acid biosynthesis; L-tryptophan biosynthesis; L-tryptophan from chorismate: step 2/5. Functionally, catalyzes the transfer of the phosphoribosyl group of 5-phosphorylribose-1-pyrophosphate (PRPP) to anthranilate to yield N-(5'-phosphoribosyl)-anthranilate (PRA). The sequence is that of Anthranilate phosphoribosyltransferase from Cupriavidus metallidurans (strain ATCC 43123 / DSM 2839 / NBRC 102507 / CH34) (Ralstonia metallidurans).